A 244-amino-acid polypeptide reads, in one-letter code: Adenosylcobinamide-GDP ribazoletransferase (244 aa).

Transmembrane regions (helical) follow at residues 31–51 (LLFY…ASHL), 55–75 (APAP…SGAL), 109–129 (IAVV…WVLV), 134–154 (GGWL…LFMG), and 188–208 (VVLG…VFLW).

The protein belongs to the CobS family. Mg(2+) serves as cofactor.

The protein localises to the cell inner membrane. The catalysed reaction is alpha-ribazole + adenosylcob(III)inamide-GDP = adenosylcob(III)alamin + GMP + H(+). It carries out the reaction alpha-ribazole 5'-phosphate + adenosylcob(III)inamide-GDP = adenosylcob(III)alamin 5'-phosphate + GMP + H(+). Its pathway is cofactor biosynthesis; adenosylcobalamin biosynthesis; adenosylcobalamin from cob(II)yrinate a,c-diamide: step 7/7. In terms of biological role, joins adenosylcobinamide-GDP and alpha-ribazole to generate adenosylcobalamin (Ado-cobalamin). Also synthesizes adenosylcobalamin 5'-phosphate from adenosylcobinamide-GDP and alpha-ribazole 5'-phosphate. This Pseudomonas entomophila (strain L48) protein is Adenosylcobinamide-GDP ribazoletransferase.